Reading from the N-terminus, the 331-residue chain is Glucan endo-1,3-beta-glucosidase, acidic isoform GL161 (331 aa).

A signal peptide spans 1-9; it reads MCSIQIIGA. Glutamine 10 is subject to Pyrrolidone carboxylic acid. Asparagine 55 and asparagine 75 each carry an N-linked (GlcNAc...) asparagine glycan. The active-site Nucleophile is the glutamate 244.

It belongs to the glycosyl hydrolase 17 family. In terms of tissue distribution, is expressed primarily in epidermal cell of healthy plant, and following induction by ethylene, accumulates in mesophyll cells.

Its subcellular location is the secreted. The protein localises to the extracellular space. The enzyme catalyses Hydrolysis of (1-&gt;3)-beta-D-glucosidic linkages in (1-&gt;3)-beta-D-glucans.. Its function is as follows. Is thought to be an important plant defense-related product against fungal pathogens. The polypeptide is Glucan endo-1,3-beta-glucosidase, acidic isoform GL161 (Nicotiana tabacum (Common tobacco)).